A 414-amino-acid polypeptide reads, in one-letter code: Multifunctional CCA protein (414 aa).

Gly-8 and Arg-11 together coordinate ATP. CTP contacts are provided by Gly-8 and Arg-11. Residues Glu-21 and Asp-23 each coordinate Mg(2+). ATP contacts are provided by Arg-91, Arg-137, and Arg-140. Positions 91, 137, and 140 each coordinate CTP. The 102-residue stretch at 228–329 (TGIHTMMTVA…LKLFDAIDVW (102 aa)) folds into the HD domain.

This sequence belongs to the tRNA nucleotidyltransferase/poly(A) polymerase family. Bacterial CCA-adding enzyme type 1 subfamily. In terms of assembly, monomer. Can also form homodimers and oligomers. The cofactor is Mg(2+). Ni(2+) serves as cofactor.

The enzyme catalyses a tRNA precursor + 2 CTP + ATP = a tRNA with a 3' CCA end + 3 diphosphate. The catalysed reaction is a tRNA with a 3' CCA end + 2 CTP + ATP = a tRNA with a 3' CCACCA end + 3 diphosphate. Functionally, catalyzes the addition and repair of the essential 3'-terminal CCA sequence in tRNAs without using a nucleic acid template. Adds these three nucleotides in the order of C, C, and A to the tRNA nucleotide-73, using CTP and ATP as substrates and producing inorganic pyrophosphate. tRNA 3'-terminal CCA addition is required both for tRNA processing and repair. Also involved in tRNA surveillance by mediating tandem CCA addition to generate a CCACCA at the 3' terminus of unstable tRNAs. While stable tRNAs receive only 3'-terminal CCA, unstable tRNAs are marked with CCACCA and rapidly degraded. The chain is Multifunctional CCA protein from Pectobacterium carotovorum subsp. carotovorum (strain PC1).